Here is a 331-residue protein sequence, read N- to C-terminus: Phosphate acyltransferase (331 aa).

This sequence belongs to the PlsX family. As to quaternary structure, homodimer. Probably interacts with PlsY.

Its subcellular location is the cytoplasm. The catalysed reaction is a fatty acyl-[ACP] + phosphate = an acyl phosphate + holo-[ACP]. The protein operates within lipid metabolism; phospholipid metabolism. In terms of biological role, catalyzes the reversible formation of acyl-phosphate (acyl-PO(4)) from acyl-[acyl-carrier-protein] (acyl-ACP). This enzyme utilizes acyl-ACP as fatty acyl donor, but not acyl-CoA. This Malacoplasma penetrans (strain HF-2) (Mycoplasma penetrans) protein is Phosphate acyltransferase.